The chain runs to 470 residues: MSHKSDLIATNIQKYLQQHQQKELLRFITCGSVDDGKSTLIGRLLHDSKLIFEDQLASIVADSKKVGTQGDRLDLALLVDGLQSEREQGITIDVAYRYFSTDKRKFIIADTPGHEQYTRNMATGASNCDLAIILIDARKGLQTQTRRHSFICSLLGIKHVIVAVNKMDTVGYSQQIYKSIQDEYLKLAGSLQIPDIRFVPISALDGDNVVSKSTKMPWFRGSPLMHYLETIKIDYAHTDEFRFPVQLVCRPNSEFRGFQGTVVSGSAKIGDTIRVMPSGKITTIKSILSFDGELNEAEAGQSITITTYDEIDISRGDMIVHKDAISHVSSMLRANIVWMSEQPLIEYKDYYIKFLTKQVIGSVNKFNYKTDINTLKEVACGTLELNEIATVELNLSEPVCFDSYQKNRTTGAFIIIDRLTNVTAGAGMVIKPLAANDKKDSTNDYSEFELELNALIRKHFPHWDAKNLRE.

A tr-type G domain is found at 22 to 236 (KELLRFITCG…YLETIKIDYA (215 aa)). The segment at 31-38 (GSVDDGKS) is G1. 31–38 (GSVDDGKS) contributes to the GTP binding site. The G2 stretch occupies residues 89–93 (GITID). The segment at 110-113 (DTPG) is G3. GTP contacts are provided by residues 110 to 114 (DTPGH) and 165 to 168 (NKMD). Positions 165 to 168 (NKMD) are G4. The segment at 202–204 (SAL) is G5.

It belongs to the TRAFAC class translation factor GTPase superfamily. Classic translation factor GTPase family. CysN/NodQ subfamily. Heterodimer composed of CysD, the smaller subunit, and CysN.

It carries out the reaction sulfate + ATP + H(+) = adenosine 5'-phosphosulfate + diphosphate. It participates in sulfur metabolism; hydrogen sulfide biosynthesis; sulfite from sulfate: step 1/3. In terms of biological role, with CysD forms the ATP sulfurylase (ATPS) that catalyzes the adenylation of sulfate producing adenosine 5'-phosphosulfate (APS) and diphosphate, the first enzymatic step in sulfur assimilation pathway. APS synthesis involves the formation of a high-energy phosphoric-sulfuric acid anhydride bond driven by GTP hydrolysis by CysN coupled to ATP hydrolysis by CysD. The protein is Sulfate adenylyltransferase subunit 1 of Francisella tularensis subsp. novicida (strain U112).